A 282-amino-acid chain; its full sequence is Stage 0 sporulation protein J (282 aa).

Positions 139 to 158 form a DNA-binding region, H-T-H motif; the sequence is EQLAKRLGKSRPHIANHLRL.

It belongs to the ParB family.

The protein resides in the cytoplasm. Its subcellular location is the nucleoid. Functionally, required for the initiation of sporulation and for normal chromosome segregation. Antagonizes sporulation inhibition by Soj. It probably interacts with a specific DNA site and other proteins involved in partitioning and cell division, and antagonizes Soj in response to cell cycle events related to chromosome partitioning. This chain is Stage 0 sporulation protein J, found in Bacillus subtilis (strain 168).